A 488-amino-acid chain; its full sequence is UDP-N-acetylmuramate--L-alanine ligase (488 aa).

Residue 129-135 (GTHGKTT) coordinates ATP.

It belongs to the MurCDEF family.

It localises to the cytoplasm. It catalyses the reaction UDP-N-acetyl-alpha-D-muramate + L-alanine + ATP = UDP-N-acetyl-alpha-D-muramoyl-L-alanine + ADP + phosphate + H(+). The protein operates within cell wall biogenesis; peptidoglycan biosynthesis. Functionally, cell wall formation. This Chromohalobacter salexigens (strain ATCC BAA-138 / DSM 3043 / CIP 106854 / NCIMB 13768 / 1H11) protein is UDP-N-acetylmuramate--L-alanine ligase.